The following is a 146-amino-acid chain: Hemoglobin subunit beta (146 aa).

N-acetylvaline is present on Val-1. The Globin domain occupies 2–146 (HLTAEEKSLV…VANALAHKYH (145 aa)). A Phosphoserine modification is found at Ser-44. Lys-59 is modified (N6-acetyllysine). Residue His-63 participates in heme b binding. An N6-acetyllysine modification is found at Lys-82. Residue His-92 coordinates heme b. An S-nitrosocysteine modification is found at Cys-93. Lys-144 bears the N6-acetyllysine mark.

The protein belongs to the globin family. As to quaternary structure, heterotetramer of two alpha chains and two beta chains. Red blood cells.

Functionally, involved in oxygen transport from the lung to the various peripheral tissues. The chain is Hemoglobin subunit beta (HBB) from Canis latrans (Coyote).